Consider the following 2890-residue polypeptide: Bifunctional DNA-directed RNA polymerase subunit beta-beta' (2890 aa).

The tract at residues 1 to 1377 (MSKKIPLKNR…DINIFGDDVD (1377 aa)) is DNA-directed RNA polymerase subunit beta. Positions 1384–2890 (PIVIKEDDRP…LRTLEDGPKF (1507 aa)) are DNA-directed RNA polymerase subunit beta'. Zn(2+) is bound by residues Cys-1449, Cys-1451, Cys-1465, and Cys-1468. Mg(2+) is bound by residues Asp-1849, Asp-1851, and Asp-1853. 4 residues coordinate Zn(2+): Cys-2179, Cys-2253, Cys-2260, and Cys-2263.

The protein in the N-terminal section; belongs to the RNA polymerase beta chain family. In the C-terminal section; belongs to the RNA polymerase beta' chain family. In terms of assembly, the RNAP catalytic core consists of 2 alpha, 1 beta/beta' and 1 omega subunit. When a sigma factor is associated with the core the holoenzyme is formed, which can initiate transcription. Mg(2+) is required as a cofactor. Requires Zn(2+) as cofactor.

The enzyme catalyses RNA(n) + a ribonucleoside 5'-triphosphate = RNA(n+1) + diphosphate. In terms of biological role, DNA-dependent RNA polymerase catalyzes the transcription of DNA into RNA using the four ribonucleoside triphosphates as substrates. The chain is Bifunctional DNA-directed RNA polymerase subunit beta-beta' (rpoBC) from Helicobacter pylori (strain HPAG1).